We begin with the raw amino-acid sequence, 93 residues long: UPF0457 protein GTNG_2792 (93 aa).

Belongs to the UPF0457 family.

This Geobacillus thermodenitrificans (strain NG80-2) protein is UPF0457 protein GTNG_2792.